We begin with the raw amino-acid sequence, 134 residues long: MSDKTQRLEIVTPQRKVFSEDVSFLVAPGTEGELGVLPNHAPLITSLNIGIMRIQQEGKTFKVVVTGGFMEVRDNKVTVLANAAERAEEIDVARAEAARRRAEERLAKKTPDIDVLRAELALKRALTRLKAAGQ.

This sequence belongs to the ATPase epsilon chain family. As to quaternary structure, F-type ATPases have 2 components, CF(1) - the catalytic core - and CF(0) - the membrane proton channel. CF(1) has five subunits: alpha(3), beta(3), gamma(1), delta(1), epsilon(1). CF(0) has three main subunits: a, b and c.

The protein localises to the cell membrane. Its function is as follows. Produces ATP from ADP in the presence of a proton gradient across the membrane. This Pelotomaculum thermopropionicum (strain DSM 13744 / JCM 10971 / SI) protein is ATP synthase epsilon chain.